Here is a 1306-residue protein sequence, read N- to C-terminus: Angiotensin-converting enzyme (1306 aa).

Positions 1 to 29 are cleaved as a signal peptide; sequence MGAASGRRGPGLLLPLPLLLLLPPQPALA. At 30–1256 the chain is on the extracellular side; the sequence is LDPGLQPGNF…GLDLDAQQAR (1227 aa). N-linked (GlcNAc...) asparagine glycans are attached at residues Asn-38, Asn-54, Asn-74, Glu-103, Asn-111, Ile-121, Tyr-140, Asn-146, and Asn-160. Peptidase M2 domains lie at 40–624 and 643–1222; these read SADE…LGWP and VTDE…LGWP. A disulfide bridge connects residues Cys-157 and Cys-165. Tyr-231 is a chloride binding site. 2 N-linked (GlcNAc...) asparagine glycosylation sites follow: Asn-318 and Asn-368. A disulfide bond links Cys-359 and Cys-377. Zn(2+) is bound at residue His-390. The Proton acceptor 1 role is filled by Glu-391. Zn(2+)-binding residues include His-394, Pro-414, Glu-418, and Arg-442. Asn-445 and Asn-509 each carry an N-linked (GlcNAc...) asparagine glycan. The Proton donor 1 role is filled by His-520. Arg-529 lines the chloride pocket. Cys-545 and Cys-557 are disulfide-bonded. Asn-617 and Asn-677 each carry an N-linked (GlcNAc...) asparagine glycan. 2 N-linked (GlcNAc...) (complex) asparagine glycosylation sites follow: Asn-695 and Asn-714. Residues Cys-757 and Cys-763 are joined by a disulfide bond. N-linked (GlcNAc...) asparagine; partial glycosylation occurs at Asn-760. Residues Arg-791 and Tyr-829 each contribute to the chloride site. A glycan (N-linked (GlcNAc...) asparagine; partial) is linked at Asn-942. Residues Cys-957 and Cys-975 are joined by a disulfide bond. His-988 serves as a coordination point for Zn(2+). Glu-989 (proton acceptor 2) is an active-site residue. Positions 992 and 1016 each coordinate Zn(2+). Chloride-binding residues include Trp-1090 and Arg-1094. His-1118 (proton donor 2) is an active-site residue. Residue Arg-1127 coordinates chloride. A disulfide bridge links Cys-1143 with Cys-1155. N-linked (GlcNAc...) asparagine; partial glycosylation is present at Asn-1191. Residues 1215–1256 form a juxtamembrane stalk region; that stretch reads HGEKLGWPQYNWTPNSARSEGPLPDSGRVSFLGLDLDAQQAR. Residues 1257-1277 form a helical membrane-spanning segment; the sequence is VGQWLLLFLGIALLVATLGLS. The Cytoplasmic segment spans residues 1278–1306; the sequence is QRLFSIRHRSLHRHSHGPQFGSEVELRHS. Residue Ser-1299 is modified to Phosphoserine.

The protein belongs to the peptidase M2 family. In terms of assembly, monomer and homodimer; homodimerizes following binding to an inhibitor. Interacts with calmodulin (CALM1, CALM2 or CALM3); interaction takes place in the cytoplasmic region and regulates phosphorylation and proteolytic cleavage. Zn(2+) serves as cofactor. Requires chloride as cofactor. In terms of processing, produced following proteolytic cleavage by secretase enzymes that cleave the transmembrane form in the juxtamembrane stalk region upstream of the transmembrane region. Cleavage can take place at different sites of the juxtamembrane stalk region. Phosphorylated by CK2 on Ser-1299; which allows membrane retention. Phosphorylated on tyrosine residues on its extracellular part, promoting cleavage by secretase enzymes and formation of the soluble form (Angiotensin-converting enzyme, soluble form). Ubiquitously expressed, with highest levels in lung, kidney, heart, gastrointestinal system and prostate. In terms of tissue distribution, specifically expressed in spermatocytes and adult testis.

The protein localises to the cell membrane. The protein resides in the cytoplasm. Its subcellular location is the secreted. The catalysed reaction is Release of a C-terminal dipeptide, oligopeptide-|-Xaa-Yaa, when Xaa is not Pro, and Yaa is neither Asp nor Glu. Thus, conversion of angiotensin I to angiotensin II, with increase in vasoconstrictor activity, but no action on angiotensin II.. It catalyses the reaction angiotensin I + H2O = L-histidyl-L-leucine + angiotensin II. The enzyme catalyses bradykinin + H2O = L-Phe-L-Arg + bradykinin(1-7). It carries out the reaction substance P + H2O = substance P(1-9) + L-Leu-L-Met-NH2. The catalysed reaction is substance P + H2O = substance P(1-8) + Gly-L-Leu-L-Met-NH2. It catalyses the reaction substance P + H2O = L-Phe-L-Phe-Gly-L-Leu-L-Met-NH2 + substance P(1-6). The enzyme catalyses neurotensin + H2O = neurotensin(1-11) + L-isoleucyl-L-leucine. It carries out the reaction goralatide + H2O = N-acetyl-L-seryl-L-aspartate + L-lysyl-L-proline. The catalysed reaction is Met-enkephalin + H2O = L-phenylalanyl-L-methionine + L-tyrosylglycylglycine. It catalyses the reaction Leu-enkephalin + H2O = L-tyrosylglycylglycine + L-phenylalanyl-L-leucine. The enzyme catalyses Met-enkephalin-Arg-Phe + H2O = L-arginyl-L-phenylalanine + Met-enkephalin. With respect to regulation, the dipeptidyl carboxypeptidase activity is strongly activated by chloride. The dipeptidyl carboxypeptidase activity is specifically inhibited by lisinopril, captopril and enalaprilat. Its activity is regulated as follows. Strongly inhibited by lisinopril and captopril. Its function is as follows. Dipeptidyl carboxypeptidase that removes dipeptides from the C-terminus of a variety of circulating hormones, such as angiotensin I, bradykinin or enkephalins, thereby playing a key role in the regulation of blood pressure, electrolyte homeostasis or synaptic plasticity. Composed of two similar catalytic domains, each possessing a functional active site, with different selectivity for substrates. Plays a major role in the angiotensin-renin system that regulates blood pressure and sodium retention by the kidney by converting angiotensin I to angiotensin II, resulting in an increase of the vasoconstrictor activity of angiotensin. Also able to inactivate bradykinin, a potent vasodilator, and therefore enhance the blood pressure response. Acts as a regulator of synaptic transmission by mediating cleavage of neuropeptide hormones, such as substance P, neurotensin or enkephalins. Catalyzes degradation of different enkephalin neuropeptides (Met-enkephalin, Leu-enkephalin, Met-enkephalin-Arg-Phe and possibly Met-enkephalin-Arg-Gly-Leu). Acts as a regulator of synaptic plasticity in the nucleus accumbens of the brain by mediating cleavage of Met-enkephalin-Arg-Phe, a strong ligand of Mu-type opioid receptor OPRM1, into Met-enkephalin. Met-enkephalin-Arg-Phe cleavage by ACE decreases activation of OPRM1, leading to long-term synaptic potentiation of glutamate release. Also acts as a regulator of hematopoietic stem cell differentiation by mediating degradation of hemoregulatory peptide N-acetyl-SDKP (AcSDKP). Acts as a regulator of cannabinoid signaling pathway by mediating degradation of hemopressin, an antagonist peptide of the cannabinoid receptor CNR1. Involved in amyloid-beta metabolism by catalyzing degradation of Amyloid-beta protein 40 and Amyloid-beta protein 42 peptides, thereby preventing plaque formation. Catalyzes cleavage of cholecystokinin (maturation of Cholecystokinin-8 and Cholecystokinin-5) and Gonadoliberin-1 (both maturation and degradation) hormones. Degradation of hemoregulatory peptide N-acetyl-SDKP (AcSDKP) and amyloid-beta proteins is mediated by the N-terminal catalytic domain, while angiotensin I and cholecystokinin cleavage is mediated by the C-terminal catalytic region. Functionally, soluble form that is released in blood plasma and other body fluids following proteolytic cleavage in the juxtamembrane stalk region. Isoform produced by alternative promoter usage that is specifically expressed in spermatocytes and adult testis, and which is required for male fertility. In contrast to somatic isoforms, only contains one catalytic domain. Acts as a dipeptidyl carboxypeptidase that removes dipeptides from the C-terminus of substrates. The identity of substrates that are needed for male fertility is unknown. May also have a glycosidase activity which releases GPI-anchored proteins from the membrane by cleaving the mannose linkage in the GPI moiety. The GPIase activity was reported to be essential for the egg-binding ability of the sperm. This activity is however unclear and has been challenged by other groups, suggesting that it may be indirect. This is Angiotensin-converting enzyme from Homo sapiens (Human).